The chain runs to 457 residues: Siroheme synthase (457 aa).

Residues 1-204 (MDHLPIFCQL…ADEKAVNATT (204 aa)) are precorrin-2 dehydrogenase /sirohydrochlorin ferrochelatase. NAD(+) is bound by residues 22 to 23 (DV) and 43 to 44 (LT). Residue Ser-128 is modified to Phosphoserine. The segment at 216 to 457 (GEVVLVGAGP…RDKLNWFSNY (242 aa)) is uroporphyrinogen-III C-methyltransferase. Pro-225 serves as a coordination point for S-adenosyl-L-methionine. Asp-248 serves as the catalytic Proton acceptor. Lys-270 functions as the Proton donor in the catalytic mechanism. S-adenosyl-L-methionine contacts are provided by residues 301-303 (GGD), Ile-306, 331-332 (TA), Met-382, and Gly-411.

This sequence in the N-terminal section; belongs to the precorrin-2 dehydrogenase / sirohydrochlorin ferrochelatase family. The protein in the C-terminal section; belongs to the precorrin methyltransferase family.

The catalysed reaction is uroporphyrinogen III + 2 S-adenosyl-L-methionine = precorrin-2 + 2 S-adenosyl-L-homocysteine + H(+). The enzyme catalyses precorrin-2 + NAD(+) = sirohydrochlorin + NADH + 2 H(+). It catalyses the reaction siroheme + 2 H(+) = sirohydrochlorin + Fe(2+). It functions in the pathway cofactor biosynthesis; adenosylcobalamin biosynthesis; precorrin-2 from uroporphyrinogen III: step 1/1. The protein operates within cofactor biosynthesis; adenosylcobalamin biosynthesis; sirohydrochlorin from precorrin-2: step 1/1. Its pathway is porphyrin-containing compound metabolism; siroheme biosynthesis; precorrin-2 from uroporphyrinogen III: step 1/1. It participates in porphyrin-containing compound metabolism; siroheme biosynthesis; siroheme from sirohydrochlorin: step 1/1. It functions in the pathway porphyrin-containing compound metabolism; siroheme biosynthesis; sirohydrochlorin from precorrin-2: step 1/1. Functionally, multifunctional enzyme that catalyzes the SAM-dependent methylations of uroporphyrinogen III at position C-2 and C-7 to form precorrin-2 via precorrin-1. Then it catalyzes the NAD-dependent ring dehydrogenation of precorrin-2 to yield sirohydrochlorin. Finally, it catalyzes the ferrochelation of sirohydrochlorin to yield siroheme. The protein is Siroheme synthase of Salmonella dublin (strain CT_02021853).